The sequence spans 596 residues: Elongation factor 4 (596 aa).

Residues 2–184 form the tr-type G domain; sequence KHIRNFSIIA…TIVAQIPSPE (183 aa). Residues 14-19 and 131-134 each bind GTP; these read DHGKST and NKID.

The protein belongs to the TRAFAC class translation factor GTPase superfamily. Classic translation factor GTPase family. LepA subfamily.

The protein localises to the cell inner membrane. The catalysed reaction is GTP + H2O = GDP + phosphate + H(+). Its function is as follows. Required for accurate and efficient protein synthesis under certain stress conditions. May act as a fidelity factor of the translation reaction, by catalyzing a one-codon backward translocation of tRNAs on improperly translocated ribosomes. Back-translocation proceeds from a post-translocation (POST) complex to a pre-translocation (PRE) complex, thus giving elongation factor G a second chance to translocate the tRNAs correctly. Binds to ribosomes in a GTP-dependent manner. In Shewanella amazonensis (strain ATCC BAA-1098 / SB2B), this protein is Elongation factor 4.